Here is a 310-residue protein sequence, read N- to C-terminus: S-adenosylmethionine-dependent nucleotide dehydratase (310 aa).

The region spanning 3-221 (PAIPPTINLH…VERHRKVESS (219 aa)) is the Radical SAM core domain. The [4Fe-4S] cluster site is built by cysteine 17, cysteine 21, and cysteine 24.

It belongs to the radical SAM superfamily. Viperin family. Requires [4Fe-4S] cluster as cofactor.

It catalyses the reaction GTP + AH2 + S-adenosyl-L-methionine = 3'-deoxy-3',4'-didehydro-GTP + 5'-deoxyadenosine + L-methionine + A + H2O + H(+). In terms of biological role, expression of pVip15 in E.coli (strain MG1655) confers resistance to phage T7; prevents culture collapse upon infection. Catalyzes the conversion of guanosine triphosphate (GTP) to 3'-deoxy-3',4'-didehydro-GTP (ddhGTP), probably via a SAM-dependent radical mechanism. The modified nucleotide represses transcription from T7 RNA polymerase-directed genes (possibly by acting as chain terminators), strongly suggesting these nucleotides block viral polymerase transcription. This is S-adenosylmethionine-dependent nucleotide dehydratase from Coraliomargarita akajimensis (strain DSM 45221 / IAM 15411 / JCM 23193 / KCTC 12865 / 04OKA010-24).